Reading from the N-terminus, the 228-residue chain is Small ribosomal subunit protein uS3 (228 aa).

The 69-residue stretch at 39-107 (IRKELNEKLK…PVNINIEEIK (69 aa)) folds into the KH type-2 domain.

This sequence belongs to the universal ribosomal protein uS3 family. Part of the 30S ribosomal subunit. Forms a tight complex with proteins S10 and S14.

In terms of biological role, binds the lower part of the 30S subunit head. Binds mRNA in the 70S ribosome, positioning it for translation. This Hydrogenovibrio crunogenus (strain DSM 25203 / XCL-2) (Thiomicrospira crunogena) protein is Small ribosomal subunit protein uS3.